The following is a 240-amino-acid chain: MIRNFLLFFMPIYAILFLSGCTANLSDPEIDFEPPAYVEEMPSKEDNKDFTSVGSVFGQGENPLFSDHKAMHVNDIVTVIISENTQSSNSGSKQISESDSLNLGGGAFTSAGTNSAVNSAVSKLNGIANLGFGSTSDSAYKGQGSATKDASFTTTVSARIVKVLQNGNYFISGKREILVDNQKQIIQIGGVIRPYDIDQGNRINSSQMSEAKILYKTQGDVERATDRGWGTKIIQSVWPF.

The signal sequence occupies residues 1–20 (MIRNFLLFFMPIYAILFLSG). Cys21 carries the N-palmitoyl cysteine lipid modification. Residue Cys21 is the site of S-diacylglycerol cysteine attachment.

This sequence belongs to the FlgH family. In terms of assembly, the basal body constitutes a major portion of the flagellar organelle and consists of four rings (L,P,S, and M) mounted on a central rod.

Its subcellular location is the cell outer membrane. The protein localises to the bacterial flagellum basal body. Assembles around the rod to form the L-ring and probably protects the motor/basal body from shearing forces during rotation. The polypeptide is Flagellar L-ring protein (Sulfurimonas denitrificans (strain ATCC 33889 / DSM 1251) (Thiomicrospira denitrificans (strain ATCC 33889 / DSM 1251))).